We begin with the raw amino-acid sequence, 142 residues long: Midkine (142 aa).

The signal sequence occupies residues 1–21 (MELRAFCVILLITFLAVSSQA). 5 cysteine pairs are disulfide-bonded: Cys-36–Cys-60, Cys-44–Cys-69, Cys-51–Cys-73, Cys-83–Cys-115, and Cys-93–Cys-125.

It belongs to the pleiotrophin family.

It is found in the secreted. Secreted protein that functions as a cytokine and growth factor and mediates its signal through cell-surface proteoglycan and non-proteoglycan receptors. Binds cell-surface proteoglycan receptors via their chondroitin sulfate (CS) groups. Thereby regulates many processes like inflammatory response, cell proliferation, cell adhesion, cell growth, cell survival, tissue regeneration, cell differentiation and cell migration. Inhibits mesoderm formation and promotes neural formation during development. Plays a role in development of the neuromuscular junction (NMJ). Has antibacterial activity against both Gram-positive and Gram-negative bacteria. The chain is Midkine from Xenopus tropicalis (Western clawed frog).